The sequence spans 751 residues: Cytosolic neutral trehalase (751 aa).

Residues 1–10 (MSQVNTSQGP) show a composition bias toward polar residues. Residues 1 to 59 (MSQVNTSQGPVAQGRQRRLSSLSEFNDPFSNAEVYYGPPTDPRKQKQAKPAKINRTRTM) are disordered. Position 2 is an N-acetylserine (S2). 2 positions are modified to phosphoserine; by PKA: S20 and S21. Phosphoserine is present on S23. The span at 45-55 (QKQAKPAKINR) shows a compositional bias: basic residues. T58 bears the Phosphothreonine mark. Position 60 is a phosphoserine; by PKA (S60). Position 66 is a phosphoserine (S66). Positions 73-92 (FGKLQQTRRGSEDDTYSSSQ) are disordered. S83 bears the Phosphoserine; by PKA mark. Residues D114, D116, N118, Q120, and D125 each coordinate Ca(2+). Substrate is bound by residues R302, 309-310 (WD), N346, 355-357 (RSQ), E424, R473, and G476. Residues D478 and E674 each act as proton donor/acceptor in the active site.

This sequence belongs to the glycosyl hydrolase 37 family. In terms of assembly, monomer. Interacts with BMH1 dimers; the interaction is direct and activates NTH1. Interacts with BMH2. It depends on Ca(2+) as a cofactor. Post-translationally, phosphorylated by protein kinase A (PKA); phosphorylation at Ser-60 and Ser-83 is required for activation by the 14-3-3 proteins BMH1 and BMH2.

It is found in the cytoplasm. It catalyses the reaction alpha,alpha-trehalose + H2O = alpha-D-glucose + beta-D-glucose. The protein operates within carbohydrate degradation. With respect to regulation, activated by calcium. Activated by protein kinase A (PKA)-mediated phosphorylation. Its function is as follows. Hydrolyzes intracellular trehalose to glucose. The disaccharide trehalose serves as a storage carbohydrate that is mobilized during nutrient stress. Regulates the level of trehalose as a protectant for cell integrity during heat stress. The chain is Cytosolic neutral trehalase from Saccharomyces cerevisiae (strain ATCC 204508 / S288c) (Baker's yeast).